A 396-amino-acid polypeptide reads, in one-letter code: Ribosomal RNA large subunit methyltransferase I (396 aa).

The 78-residue stretch at 2–79 (AVRIKLKPGR…REEEIDREFF (78 aa)) folds into the PUA domain.

It belongs to the methyltransferase superfamily. RlmI family.

Its subcellular location is the cytoplasm. The catalysed reaction is cytidine(1962) in 23S rRNA + S-adenosyl-L-methionine = 5-methylcytidine(1962) in 23S rRNA + S-adenosyl-L-homocysteine + H(+). Specifically methylates the cytosine at position 1962 (m5C1962) of 23S rRNA. This chain is Ribosomal RNA large subunit methyltransferase I, found in Shewanella sp. (strain MR-4).